The chain runs to 578 residues: Sulfite reductase [NADPH] hemoprotein beta-component (578 aa).

[4Fe-4S] cluster is bound by residues C441, C447, C487, and C491. C491 contributes to the siroheme binding site.

This sequence belongs to the nitrite and sulfite reductase 4Fe-4S domain family. As to quaternary structure, alpha(8)-beta(8). The alpha component is a flavoprotein, the beta component is a hemoprotein. It depends on siroheme as a cofactor. [4Fe-4S] cluster serves as cofactor.

It carries out the reaction hydrogen sulfide + 3 NADP(+) + 3 H2O = sulfite + 3 NADPH + 4 H(+). It functions in the pathway sulfur metabolism; hydrogen sulfide biosynthesis; hydrogen sulfide from sulfite (NADPH route): step 1/1. In terms of biological role, component of the sulfite reductase complex that catalyzes the 6-electron reduction of sulfite to sulfide. This is one of several activities required for the biosynthesis of L-cysteine from sulfate. In Vibrio parahaemolyticus serotype O3:K6 (strain RIMD 2210633), this protein is Sulfite reductase [NADPH] hemoprotein beta-component.